Consider the following 530-residue polypeptide: Chaperonin GroEL 2 (530 aa).

ATP contacts are provided by residues 30–33 (TLGP), lysine 51, 87–91 (DGTTT), glycine 415, 479–481 (NAA), and aspartate 495.

The protein belongs to the chaperonin (HSP60) family. As to quaternary structure, forms a cylinder of 14 subunits composed of two heptameric rings stacked back-to-back. Interacts with the co-chaperonin GroES.

Its subcellular location is the cytoplasm. The enzyme catalyses ATP + H2O + a folded polypeptide = ADP + phosphate + an unfolded polypeptide.. In terms of biological role, together with its co-chaperonin GroES, plays an essential role in assisting protein folding. The GroEL-GroES system forms a nano-cage that allows encapsulation of the non-native substrate proteins and provides a physical environment optimized to promote and accelerate protein folding. In Vibrio cholerae serotype O1 (strain ATCC 39315 / El Tor Inaba N16961), this protein is Chaperonin GroEL 2.